A 103-amino-acid polypeptide reads, in one-letter code: Large ribosomal subunit protein uL24 (103 aa).

The protein belongs to the universal ribosomal protein uL24 family. In terms of assembly, part of the 50S ribosomal subunit.

One of two assembly initiator proteins, it binds directly to the 5'-end of the 23S rRNA, where it nucleates assembly of the 50S subunit. Its function is as follows. One of the proteins that surrounds the polypeptide exit tunnel on the outside of the subunit. The protein is Large ribosomal subunit protein uL24 of Actinobacillus pleuropneumoniae serotype 5b (strain L20).